The following is a 98-amino-acid chain: MSVSITPLEDRIVVKPLDAEQTTASGLVIPDTAKEKPQEGEVLAVGPGRVDDNGNRVPVDVAVGDKVIYSKYGGTEVKYGGDELLILSARDVLAKVAK.

Belongs to the GroES chaperonin family. As to quaternary structure, heptamer of 7 subunits arranged in a ring. Interacts with the chaperonin GroEL.

The protein resides in the cytoplasm. Together with the chaperonin GroEL, plays an essential role in assisting protein folding. The GroEL-GroES system forms a nano-cage that allows encapsulation of the non-native substrate proteins and provides a physical environment optimized to promote and accelerate protein folding. GroES binds to the apical surface of the GroEL ring, thereby capping the opening of the GroEL channel. In Kineococcus radiotolerans (strain ATCC BAA-149 / DSM 14245 / SRS30216), this protein is Co-chaperonin GroES.